Reading from the N-terminus, the 586-residue chain is Inner membrane protein YejM (586 aa).

Topologically, residues 1 to 20 (MVTHRQRYREKVSQMVSWGH) are cytoplasmic. A helical membrane pass occupies residues 21-43 (WFALFNILLSLVIGSRYLFIADW). Over 44-57 (PTTLAGRIYSYVSI) the chain is Periplasmic. The helical transmembrane segment at 58-80 (IGHFSFLVFATYLLILFPLTFIV) threads the bilayer. Over 81 to 84 (GSQR) the chain is Cytoplasmic. Residues 85–103 (LMRFLSVILATAGMTLLLI) traverse the membrane as a helical segment. The Periplasmic segment spans residues 104–134 (DSEVFTRFHLHLNPIVWQLVINPDENEMARD). Residues 135-157 (WQLMFISVPVILLLELVFATWSW) traverse the membrane as a helical segment. Over 158–168 (QKLRSLTRRRR) the chain is Cytoplasmic. Residues 169–191 (FARPLAAFLFIAFIASHVVYIWA) traverse the membrane as a helical segment. Residues 192-586 (DANFYRPITM…LTDEKRFIAN (395 aa)) lie on the Periplasmic side of the membrane.

This sequence to H.influenzae HI_0842.

It is found in the cell inner membrane. In Escherichia coli O157:H7, this protein is Inner membrane protein YejM (yejM).